The primary structure comprises 194 residues: Ras-like protein RAS1 (194 aa).

16 to 23 (GAGGVGKS) serves as a coordination point for GTP. Positions 38-46 (YDPTIEDSY) match the Effector region motif. Residues 63–67 (DTAGQ) and 122–125 (NKVD) contribute to the GTP site. The residue at position 191 (cysteine 191) is a Cysteine methyl ester. The S-geranylgeranyl cysteine moiety is linked to residue cysteine 191. Residues 192–194 (TLL) constitute a propeptide, removed in mature form.

It belongs to the small GTPase superfamily. Ras family.

It localises to the cell membrane. The catalysed reaction is GTP + H2O = GDP + phosphate + H(+). Alternates between an inactive form bound to GDP and an active form bound to GTP. Activated by a guanine nucleotide-exchange factor (GEF) and inactivated by a GTPase-activating protein (GAP). Functionally, ras proteins bind GDP/GTP and possess intrinsic GTPase activity. This chain is Ras-like protein RAS1 (RAS1), found in Hydra vulgaris (Hydra).